A 52-amino-acid polypeptide reads, in one-letter code: UPF0391 membrane protein ACIAD3602 (52 aa).

Transmembrane regions (helical) follow at residues isoleucine 6–leucine 26 and phenylalanine 30–glycine 50.

Belongs to the UPF0391 family.

It is found in the cell membrane. In Acinetobacter baylyi (strain ATCC 33305 / BD413 / ADP1), this protein is UPF0391 membrane protein ACIAD3602.